The chain runs to 182 residues: Putative manganese efflux pump MntP (182 aa).

Transmembrane regions (helical) follow at residues 6-26, 37-57, 71-91, 101-121, 131-151, and 162-182; these read LIPL…VSLG, ILYI…IGMV, HFAG…SSIL, IGIS…SVGL, VITI…GLFI, and YGEI…LFPI.

It belongs to the MntP (TC 9.B.29) family.

Its subcellular location is the cell membrane. In terms of biological role, probably functions as a manganese efflux pump. This is Putative manganese efflux pump MntP from Bacillus cereus (strain AH187).